The chain runs to 315 residues: Protein phosphatase PTC7 homolog fig (315 aa).

Residues Lys54–Val309 form the PPM-type phosphatase domain. Mn(2+) contacts are provided by Asp86, Gly87, and Asp231.

Belongs to the PP2C family. Mg(2+) is required as a cofactor. Mn(2+) serves as cofactor.

The catalysed reaction is O-phospho-L-seryl-[protein] + H2O = L-seryl-[protein] + phosphate. It catalyses the reaction O-phospho-L-threonyl-[protein] + H2O = L-threonyl-[protein] + phosphate. The chain is Protein phosphatase PTC7 homolog fig from Drosophila willistoni (Fruit fly).